A 223-amino-acid chain; its full sequence is Ribonuclease S-2 (223 aa).

A signal peptide spans 1–22 (MAKSQLVSALFVFFFSLSPIYG). A disulfide bridge links C38 with C44. N51 is a glycosylation site (N-linked (GlcNAc...) asparagine). Catalysis depends on H55, which acts as the Proton donor. RNA-binding positions include H55 and 94 to 95 (QL). Disulfide bonds link C71–C119, C178–C211, and C194–C205. The active site involves Q112. Residue 115 to 116 (KH) participates in RNA binding. H116 (proton acceptor) is an active-site residue.

This sequence belongs to the RNase T2 family. Pistil.

The protein localises to the secreted. The protein resides in the extracellular space. The catalysed reaction is a ribonucleotidyl-ribonucleotide-RNA + H2O = a 3'-end 3'-phospho-ribonucleotide-RNA + a 5'-end dephospho-ribonucleoside-RNA + H(+). Self-incompatibility (SI) is the inherited ability of a flowering plant to prevent self-fertilization by discriminating between self and non-self pollen during pollination. In many species of the Solanaceae, self-incompatibility is controlled by the single, multiallelic locus S. This stylar glycoprotein is associated with expression of self-incompatibility in potato. The protein is Ribonuclease S-2 of Solanum tuberosum (Potato).